Reading from the N-terminus, the 415-residue chain is G patch domain-containing protein 4 (415 aa).

At methionine 1 the chain carries N-acetylmethionine. The residue at position 4 (threonine 4) is a Phosphothreonine. One can recognise a G-patch domain in the interval 11–57 (GMKFAEEQLLKHGWTQGKGLGRRENGITQALKVTLKQDNHGVGHDPA). Lysine 46 is covalently cross-linked (Glycyl lysine isopeptide (Lys-Gly) (interchain with G-Cter in SUMO2)). At threonine 116 the chain carries Phosphothreonine. Disordered regions lie at residues 116 to 141 (TSGE…TPPK) and 191 to 415 (LGTS…VDLS). The span at 118 to 141 (GEEKPDRDLGNCSDVDNHEPTPPK) shows a compositional bias: basic and acidic residues. Serine 130 is modified (phosphoserine). Residues 191 to 201 (LGTSQPLTDSE) show a composition bias toward polar residues. The span at 224-239 (SLGDELLGHTDRSFRD) shows a compositional bias: basic and acidic residues. The residue at position 258 (serine 258) is a Phosphoserine. Acidic residues predominate over residues 335–345 (EDLDTQEEEGK). Over residues 353-364 (RKVRRKDKRKRQ) the composition is skewed to basic residues. The span at 387 to 397 (AGERSRQYPKE) shows a compositional bias: basic and acidic residues. Residues 398-407 (RAKKKKRKRD) are compositionally biased toward basic residues.

The protein is G patch domain-containing protein 4 (Gpatch4) of Mus musculus (Mouse).